A 391-amino-acid chain; its full sequence is MVDWVVLLLKAVHIYCYLIGLSNFEFDCRTGRVFKSRRCTIYAFMANIFILITIIYNFTAHGDTNLLFQSANKLHEYVIIIMSGLKIVAGLITVLNRWLQRGQMMQLVKDVIRLYMINPQLKSMIRWGILLKAFISFAIELLQVTLSVDALDRQGTAEMMGLLVKLCVSFIMNLAISQHFLVILLIRAQYRIMNAKLRMVIEESRRLSFLQLRNGAFMTRCCYLSDQLEDIGEVQSQLQSMVGQLDEVFGMQGLMAYSEYYLSIVGTSYMSYSIYKYGPHNLKLSAKTSIIVCILITLFYLDALVNCNNMLRVLDHHKDFLGLLEERTVFASSLDIRLEESFESLQLQLARNPLKINVMGMFPITRGSTAAMCASVIVNSIFLIQFDMEFF.

Residues 1 to 4 (MVDW) lie on the Cytoplasmic side of the membrane. A helical membrane pass occupies residues 5-25 (VVLLLKAVHIYCYLIGLSNFE). The Extracellular portion of the chain corresponds to 26–39 (FDCRTGRVFKSRRC). The chain crosses the membrane as a helical span at residues 40–60 (TIYAFMANIFILITIIYNFTA). Topologically, residues 61 to 74 (HGDTNLLFQSANKL) are cytoplasmic. The chain crosses the membrane as a helical span at residues 75–95 (HEYVIIIMSGLKIVAGLITVL). At 96–127 (NRWLQRGQMMQLVKDVIRLYMINPQLKSMIRW) the chain is on the extracellular side. A helical transmembrane segment spans residues 128 to 148 (GILLKAFISFAIELLQVTLSV). Residues 149–165 (DALDRQGTAEMMGLLVK) lie on the Cytoplasmic side of the membrane. A helical membrane pass occupies residues 166–186 (LCVSFIMNLAISQHFLVILLI). Residues 187–284 (RAQYRIMNAK…YKYGPHNLKL (98 aa)) are Extracellular-facing. Residues 285–305 (SAKTSIIVCILITLFYLDALV) traverse the membrane as a helical segment. Topologically, residues 306–363 (NCNNMLRVLDHHKDFLGLLEERTVFASSLDIRLEESFESLQLQLARNPLKINVMGMFP) are cytoplasmic. A helical transmembrane segment spans residues 364 to 384 (ITRGSTAAMCASVIVNSIFLI). Residues 385-391 (QFDMEFF) lie on the Extracellular side of the membrane.

Belongs to the insect chemoreceptor superfamily. Gustatory receptor (GR) family. Gr22e subfamily. As to expression, expressed in neurons of the terminal external chemosensory organ of larvae.

It localises to the cell membrane. In terms of biological role, probable gustatory receptor which mediates acceptance or avoidance behavior, depending on its substrates. In Drosophila melanogaster (Fruit fly), this protein is Putative gustatory receptor 36b (Gr36b).